The following is a 1338-amino-acid chain: Nonribosomal peptide synthetase astA (1338 aa).

Positions 22–52 (IAVVSGDIPSPHPKNEPSQTSTLHIPRDSDL) are disordered. The adenylation stretch occupies residues 271–681 (FQARCRQNPS…GRKGAEVKLR (411 aa)). The Carrier domain occupies 820–893 (TPVEIIIHDA…SLAEKCSAGG (74 aa)). The residue at position 854 (Ser854) is an O-(pantetheine 4'-phosphoryl)serine. Residues 949-1336 (TFIFRLSGPV…IIRFLDSPDS (388 aa)) form a condensation region.

Belongs to the NRP synthetase family.

The catalysed reaction is 7beta,14,16-trihydroxyconfertifolin + benzoate + H(+) = dideacetyl astellolide A + H2O. It catalyses the reaction 7beta,14,16-trihydroxyconfertifolin + 4-hydroxybenzoate + H(+) = dideacetyl astellolide B + H2O. It participates in secondary metabolite biosynthesis; terpenoid biosynthesis. Its function is as follows. Nonribosomal peptide synthetase; part of the gene cluster that mediates the biosynthesis of astellolides, drimane-type sesquiterpene esters that show antimicrobial, anti-inflammatory, and anti-tumor activities. The first step in astellolide biosynthesis is performed by the sesquiterpene cyclase astC that catalyzes the formation of drimanyl pyrophosphate from farnesyl pyrophosphate. Drimanyl pyrophosphate is then dephosphorylated by the sesquiterpene phosphatase astI to produce drimanyl monophosphate which is further dephosphorylated to drim-8-ene-11-ol by atsK. Drim-8-ene-11-ol is converted to confertifolin, probably by the cytochrome P450 monooxygenase astD and/or the dehydrogenase astE. The cytochrome P450 monooxygenases astB, astF and astJ then hydroxylate confertifolin at C6, C14, or C15 to form trihydroxy confertifolin. The nonribosomal peptide synthetase astA catalyzes ester bond formation between trihydroxy contifolin and benzoic acid (BA) or 4-hydroxy benzoic acid (4HBA), leading to the formation of dideacetyl astellolides A and B, respectively. Finally, the O-acetyltransferase astG converts dideacetyl astellolides A and B into deacetyl astellolides A and B. The sequence is that of Nonribosomal peptide synthetase astA from Aspergillus oryzae (strain ATCC 42149 / RIB 40) (Yellow koji mold).